Here is a 347-residue protein sequence, read N- to C-terminus: NADH-ubiquinone oxidoreductase chain 2 (347 aa).

A run of 10 helical transmembrane segments spans residues Pro3–Ser23, Trp26–Met46, Ser67–Met87, Tyr96–Pro116, Leu149–Gly169, Ile178–Thr198, Leu200–Ile220, Ile239–Gly259, Asn274–Met294, and Leu325–Ile345.

This sequence belongs to the complex I subunit 2 family. Core subunit of respiratory chain NADH dehydrogenase (Complex I) which is composed of 45 different subunits. Interacts with TMEM242.

It localises to the mitochondrion inner membrane. The enzyme catalyses a ubiquinone + NADH + 5 H(+)(in) = a ubiquinol + NAD(+) + 4 H(+)(out). Functionally, core subunit of the mitochondrial membrane respiratory chain NADH dehydrogenase (Complex I) which catalyzes electron transfer from NADH through the respiratory chain, using ubiquinone as an electron acceptor. Essential for the catalytic activity and assembly of complex I. The sequence is that of NADH-ubiquinone oxidoreductase chain 2 from Dasypus novemcinctus (Nine-banded armadillo).